Reading from the N-terminus, the 321-residue chain is MNMMRTAMLLAFMTALFMGVGFLIGGKGGMMIALLIAAGMNLFSYWNSDKMVLSAYRAREIDEANAPEFFHMIRDLSQNAGLPMPKVYIYDSPQPNAFATGRNPENAAVAASTGLLERLTPEEVAGVMAHELAHVQNRDTLTMTITATLAGAISMLGNFAFFFGGNRENNNNPLGFIGVLVAMIVAPLAAMLVQMAISRTREYSADRRGAEICGNPLWLASALQKISGMAQQIHNDDAERNPATAHMFIINPLSGERMDNLFSTHPNTENRVAALHAMAQEFSPRASTPPPSGDRPVRKSGSVPTTGWRRGNENERKGPWS.

Transmembrane regions (helical) follow at residues 6 to 26 (TAML…LIGG) and 28 to 48 (GGMM…YWNS). H130 provides a ligand contact to Zn(2+). E131 is a catalytic residue. H134 contributes to the Zn(2+) binding site. The next 2 helical transmembrane spans lie at 145–165 (ITAT…FFGG) and 173–193 (PLGF…AMLV). E202 provides a ligand contact to Zn(2+). The disordered stretch occupies residues 281 to 321 (EFSPRASTPPPSGDRPVRKSGSVPTTGWRRGNENERKGPWS). The segment covering 310–321 (RGNENERKGPWS) has biased composition (basic and acidic residues).

It belongs to the peptidase M48B family. The cofactor is Zn(2+).

Its subcellular location is the cell inner membrane. This chain is Protease HtpX homolog, found in Agrobacterium fabrum (strain C58 / ATCC 33970) (Agrobacterium tumefaciens (strain C58)).